The primary structure comprises 338 residues: Methionine import ATP-binding protein MetN 1 (338 aa).

An ABC transporter domain is found at 2–241 (IELHQVSKSF…AKHATTKRFV (240 aa)). 38–45 (GYSGAGKS) contributes to the ATP binding site.

This sequence belongs to the ABC transporter superfamily. Methionine importer (TC 3.A.1.24) family. As to quaternary structure, the complex is composed of two ATP-binding proteins (MetN), two transmembrane proteins (MetI) and a solute-binding protein (MetQ).

Its subcellular location is the cell membrane. It catalyses the reaction L-methionine(out) + ATP + H2O = L-methionine(in) + ADP + phosphate + H(+). It carries out the reaction D-methionine(out) + ATP + H2O = D-methionine(in) + ADP + phosphate + H(+). Part of the ABC transporter complex MetNIQ involved in methionine import. Responsible for energy coupling to the transport system. The polypeptide is Methionine import ATP-binding protein MetN 1 (Listeria monocytogenes serotype 4b (strain F2365)).